The chain runs to 396 residues: Ribosomal RNA large subunit methyltransferase I (396 aa).

Positions 2–81 constitute a PUA domain; sequence TVRLILAKGR…EVIDCAFFIR (80 aa).

Belongs to the methyltransferase superfamily. RlmI family.

Its subcellular location is the cytoplasm. The enzyme catalyses cytidine(1962) in 23S rRNA + S-adenosyl-L-methionine = 5-methylcytidine(1962) in 23S rRNA + S-adenosyl-L-homocysteine + H(+). Specifically methylates the cytosine at position 1962 (m5C1962) of 23S rRNA. This chain is Ribosomal RNA large subunit methyltransferase I, found in Yersinia pseudotuberculosis serotype O:1b (strain IP 31758).